Consider the following 406-residue polypeptide: Tryptophan 2,3-dioxygenase (406 aa).

Ser-19 is subject to Phosphoserine. Substrate is bound by residues 72 to 76 and Arg-144; that span reads FIITH. A heme-binding site is contributed by His-328. Thr-342 lines the substrate pocket.

This sequence belongs to the tryptophan 2,3-dioxygenase family. Homotetramer. Dimer of dimers. Requires heme as cofactor. In terms of tissue distribution, liver.

It catalyses the reaction L-tryptophan + O2 = N-formyl-L-kynurenine. It functions in the pathway amino-acid degradation; L-tryptophan degradation via kynurenine pathway; L-kynurenine from L-tryptophan: step 1/2. Heme-dependent dioxygenase that catalyzes the oxidative cleavage of the L-tryptophan (L-Trp) pyrrole ring and converts L-tryptophan to N-formyl-L-kynurenine. Catalyzes the oxidative cleavage of the indole moiety. The chain is Tryptophan 2,3-dioxygenase from Rattus norvegicus (Rat).